The chain runs to 2303 residues: Genome polyprotein (2303 aa).

Residues 3-14 (CKHGYPDVCPIC) fold into a zinc finger. Positions 30 to 46 (DGEWYPTDLLCVDLDDD) are acidic. A theilo region spans residues 60–73 (MDWTDVPLIRDIVM). The disordered stretch occupies residues 74–93 (EPQGNSSSSDKSNSQSSGNE). Gly77 is lipidated: N-myristoyl glycine; by host. Low complexity predominate over residues 78 to 92 (NSSSSDKSNSQSSGN). The cysteines at positions 501 and 503 are disulfide-linked. The segment at 1041–1047 (YYRQRLI) is host EIF4E binding. The region spanning 1283–1448 (IPLASLCEKF…CKTPAGMLDV (166 aa)) is the SF3 helicase domain. 1312 to 1319 (GAAGQGKS) contacts ATP. Residue Tyr1608 is modified to O-(5'-phospho-RNA)-tyrosine. One can recognise a Peptidase C3 domain in the interval 1636–1829 (NPVMDFELFC…AATIITKELI (194 aa)). Catalysis depends on for protease 3C activity residues His1680, Asp1714, and Cys1793. The 119-residue stretch at 2071–2189 (NYVYDVDYSN…GTNYQIDFNL (119 aa)) folds into the RdRp catalytic domain. Active-site for RdRp activity residues include Asp2077 and Asp2175.

This sequence belongs to the picornaviruses polyprotein family. As to quaternary structure, interacts with host EIF4E. Interacts with the leader protein. Interacts with host RAN; the complex L-RAN recruits cellular kinases responsible for the L-induced nucleocytoplasmic trafficking inhibition. The complex L-RAN can further bind to the host exportins XPO1/CRM1 and CSE1L/CAS. Interacts with the protein 2A. Interacts with host RNASEL; this interaction prevents RNASEL activation by its substrate 2'-5' oligoadenylates. In terms of processing, phosphorylated. Specific enzymatic cleavages by the viral protease in vivo yield a variety of precursors and mature proteins. The polyprotein seems to be cotranslationally cleaved at the 2A/2B junction by a ribosomal skip from one codon to the next without formation of a peptide bond. This process would release the P1-2A peptide from the translational complex. Post-translationally, during virion maturation, immature virions are rendered infectious following cleavage of VP0 into VP4 and VP2. This maturation seems to be an autocatalytic event triggered by the presence of RNA in the capsid and is followed by a conformational change of the particle. In terms of processing, uridylylated by the polymerase and is covalently linked to the 5'-end of genomic RNA. This uridylylated form acts as a nucleotide-peptide primer for the polymerase. Myristoylation is required during RNA encapsidation and formation of the mature virus particle.

It is found in the virion. The protein resides in the host cytoplasm. Its subcellular location is the host nucleus. The protein localises to the host nucleolus. It localises to the host cytoplasmic vesicle membrane. It carries out the reaction RNA(n) + a ribonucleoside 5'-triphosphate = RNA(n+1) + diphosphate. The enzyme catalyses ATP + H2O = ADP + phosphate + H(+). The catalysed reaction is Selective cleavage of Gln-|-Gly bond in the poliovirus polyprotein. In other picornavirus reactions Glu may be substituted for Gln, and Ser or Thr for Gly.. Forms a complex with host RAN and probably binds to exportins carrying activated MAPK in order to mediate the hyperphosphorylation of host Phe/Gly containing nuclear pore proteins (Nups) resulting in cessation of active nucleocytoplasmic transport. Proteins with NLS signals fail to import, cellular mRNAs fail to export, and some proteins small enough for diffusion are not retained anymore (efflux). The resulting inhibition of cellular protein synthesis serves to ensure maximal viral gene expression and to evade host immune response. The leader protein also inhibits host interferon regulatory factor 3 (IRF3) dimerization, thereby blocking the transcriptional activation of IFN genes. Binds to host RNase L thereby preventing its activation by 2'-5' oligoadenylates in order to counteract the antiviral interferon-inducible OAS/RNase L pathway. Inhibits the integrated stress response (ISR) in the infected cell. Inhibits the host EIF2AK2/PKR by rendering this kinase unable to detect double-stranded RNA. Also impairs host stress granule formation probably by acting on a step downstream of EIF2AK2/PKR activation. Its function is as follows. Forms an icosahedral capsid of pseudo T=3 symmetry with capsid proteins VP2 and VP3. Together they form an icosahedral capsid composed of 60 copies of each VP1, VP2, and VP3, with a diameter of approximately 300 Angstroms. VP4 lies on the inner surface of the protein shell formed by VP1, VP2 and VP3. All the three latter proteins contain a beta-sheet structure called beta-barrel jelly roll. VP1 is situated at the 12 fivefold axes, whereas VP2 and VP3 are located at the quasi-sixfold axes. In terms of biological role, lies on the inner surface of the capsid shell. After binding to the host receptor, the capsid undergoes conformational changes. Capsid protein VP4 is released, capsid protein VP1 N-terminus is externalized, and together, they shape a pore in the host membrane through which the viral genome is translocated into the host cell cytoplasm. After genome has been released, the channel shrinks. Functionally, VP0 precursor is a component of immature procapsids. Involved in host translation shutoff by inhibiting cap-dependent mRNA translation. Nuclear localization is required for this function. The resulting inhibition of cellular protein synthesis serves to ensure maximal viral gene expression and to evade host immune response. Inhibits the phosphorylation of the leader protein. Its function is as follows. Affects membrane integrity and causes an increase in membrane permeability. In terms of biological role, associates with and induces structural rearrangements of intracellular membranes. It displays RNA-binding, nucleotide binding and NTPase activities. Functionally, serves as membrane anchor via its hydrophobic domain. Forms a primer, VPg-pU, which is utilized by the polymerase for the initiation of RNA chains. Its function is as follows. Cysteine protease that generates mature viral proteins from the precursor polyprotein. In addition to its proteolytic activity, it binds to viral RNA, and thus influences viral genome replication. RNA and substrate cooperatively bind to the protease. Cleaves host PABP1, this cleavage is important for viral replication. In terms of biological role, replicates the genomic and antigenomic RNAs by recognizing replications specific signals. Performs VPg uridylylation. The polypeptide is Genome polyprotein (Mus musculus (Mouse)).